A 502-amino-acid chain; its full sequence is Probable glycerol kinase (502 aa).

Threonine 11 is a binding site for substrate. An ATP-binding site is contributed by arginine 15. Positions 85, 140, and 246 each coordinate substrate. Residues threonine 268, glycine 313, and 416 to 420 (GMIAN) each bind ATP.

The protein belongs to the FGGY kinase family.

The catalysed reaction is glycerol + ATP = sn-glycerol 3-phosphate + ADP + H(+). Its pathway is polyol metabolism; glycerol degradation via glycerol kinase pathway; sn-glycerol 3-phosphate from glycerol: step 1/1. In Caenorhabditis elegans, this protein is Probable glycerol kinase.